The chain runs to 367 residues: Adenosine deaminase (367 aa).

Residues His-46 and His-48 each contribute to the Zn(2+) site. A purine D-ribonucleoside-binding positions include 48 to 50, Asp-176, and Gly-205; that span reads HLD. Residues 174–188 form a gating helix loop; regulates binding affinity for substrates and thus substrate selectivity region; the sequence is TGDGGLSHERMKEAA. Residue His-230 coordinates Zn(2+). A purine D-ribonucleoside contacts are provided by Glu-233, His-257, and Asp-314. Residue Asp-314 coordinates Zn(2+).

The protein belongs to the metallo-dependent hydrolases superfamily. Adenosine and AMP deaminases family. Zn(2+) serves as cofactor.

It carries out the reaction adenosine + H2O + H(+) = inosine + NH4(+). The enzyme catalyses S-methyl-5'-thioadenosine + H2O + H(+) = S-methyl-5'-thioinosine + NH4(+). Its pathway is purine metabolism; purine nucleoside salvage. Its activity is regulated as follows. Inhibited by coformycin and methylthiocoformycin (MT-coformycin). Functionally, catalyzes the hydrolytic deamination of adenosine to produce inosine. Unlike mammalian adenosine deaminases, also catalyzes the deamination of 5'-methylthioadenosine (MTA), a by-product of polyamine biosynthesis, to produce 5'-methylthioinosine (MTI). Plays an essential role in the purine salvage pathway which allows the parasite to use host cell purines for the synthesis of nucleic acids. The protein is Adenosine deaminase of Plasmodium falciparum (isolate 3D7).